The following is a 254-amino-acid chain: Cell division protein DivIB (254 aa).

The Cytoplasmic segment spans residues 1-21 (MPNAQIPVLKKNRTKKRTSRK). Residues 22-42 (IAILLILLFIVLLAVLFFRSS) traverse the membrane as a helical segment. Residues 43–254 (LSRVSEIRFD…EEGQEKDTTQ (212 aa)) lie on the Extracellular side of the membrane. Positions 44–112 (SRVSEIRFDG…GIIAIHIKEF (69 aa)) constitute a POTRA domain.

This sequence belongs to the FtsQ/DivIB family. DivIB subfamily.

It localises to the cell membrane. In terms of biological role, cell division protein that may be involved in stabilizing or promoting the assembly of the division complex. This chain is Cell division protein DivIB, found in Paenibacillus polymyxa (strain E681).